The following is a 295-amino-acid chain: Guided entry of tail-anchored proteins factor CAMLG (295 aa).

Disordered regions lie at residues M1–P73 and G127–H148. Residues M1–R188 are Cytoplasmic-facing. Residues A15 to Q24 show a composition bias toward polar residues. Phosphoserine is present on S53. A compositionally biased stretch (basic and acidic residues) spans G127 to L138. The chain crosses the membrane as a helical span at residues I189–V206. At C207 to K208 the chain is on the lumenal side. Residues C207 and C283 are joined by a disulfide bond. Residues Y209–Y227 form a helical membrane-spanning segment. At K228–E268 the chain is on the cytoplasmic side. Residues V269–L287 traverse the membrane as a helical segment. Residues E288–P295 are Lumenal-facing.

In terms of assembly, component of the Golgi to ER traffic (GET) complex, which is composed of GET1/WRB, CAMLG/GET2 and GET3/TRC40. Within the complex, GET1 and CAMLG form a heterotetramer which is stabilized by phosphatidylinositol binding and which binds to the GET3 homodimer. Interacts (via C-terminus) with GET1. Interacts (via N-terminus) with GET3. GET3 shows a higher affinity for CAMLG than for GET1. Interacts (via N-terminus) with TNFRSF13B/TACI (via C-terminus). As to expression, in the central nervous system, expressed in astrocytes, microglia and neurons (at protein level).

It localises to the endoplasmic reticulum membrane. Its function is as follows. Required for the post-translational delivery of tail-anchored (TA) proteins to the endoplasmic reticulum. Together with GET1/WRB, acts as a membrane receptor for soluble GET3/TRC40, which recognizes and selectively binds the transmembrane domain of TA proteins in the cytosol. Required for the stability of GET1. Stimulates calcium signaling in T cells through its involvement in elevation of intracellular calcium. Essential for the survival of peripheral follicular B cells. The protein is Guided entry of tail-anchored proteins factor CAMLG of Rattus norvegicus (Rat).